Here is a 336-residue protein sequence, read N- to C-terminus: Glycerol-3-phosphate dehydrogenase [NAD(P)+] (336 aa).

Residues serine 11, tryptophan 12, arginine 33, arginine 34, and lysine 107 each coordinate NADPH. Residues lysine 107 and glycine 137 each contribute to the sn-glycerol 3-phosphate site. Alanine 141 contributes to the NADPH binding site. The sn-glycerol 3-phosphate site is built by lysine 192, aspartate 245, serine 255, arginine 256, and asparagine 257. Residue lysine 192 is the Proton acceptor of the active site. Arginine 256 provides a ligand contact to NADPH. Glutamate 282 contributes to the NADPH binding site.

This sequence belongs to the NAD-dependent glycerol-3-phosphate dehydrogenase family.

It is found in the cytoplasm. The enzyme catalyses sn-glycerol 3-phosphate + NAD(+) = dihydroxyacetone phosphate + NADH + H(+). It carries out the reaction sn-glycerol 3-phosphate + NADP(+) = dihydroxyacetone phosphate + NADPH + H(+). Its pathway is membrane lipid metabolism; glycerophospholipid metabolism. In terms of biological role, catalyzes the reduction of the glycolytic intermediate dihydroxyacetone phosphate (DHAP) to sn-glycerol 3-phosphate (G3P), the key precursor for phospholipid synthesis. The sequence is that of Glycerol-3-phosphate dehydrogenase [NAD(P)+] from Thermobifida fusca (strain YX).